We begin with the raw amino-acid sequence, 245 residues long: 2-C-methyl-D-erythritol 4-phosphate cytidylyltransferase (245 aa).

Belongs to the IspD/TarI cytidylyltransferase family. IspD subfamily.

The catalysed reaction is 2-C-methyl-D-erythritol 4-phosphate + CTP + H(+) = 4-CDP-2-C-methyl-D-erythritol + diphosphate. The protein operates within isoprenoid biosynthesis; isopentenyl diphosphate biosynthesis via DXP pathway; isopentenyl diphosphate from 1-deoxy-D-xylulose 5-phosphate: step 2/6. Its function is as follows. Catalyzes the formation of 4-diphosphocytidyl-2-C-methyl-D-erythritol from CTP and 2-C-methyl-D-erythritol 4-phosphate (MEP). The sequence is that of 2-C-methyl-D-erythritol 4-phosphate cytidylyltransferase from Chloroherpeton thalassium (strain ATCC 35110 / GB-78).